The sequence spans 417 residues: Glutamate-1-semialdehyde 2,1-aminomutase (417 aa).

K267 carries the N6-(pyridoxal phosphate)lysine modification.

It belongs to the class-III pyridoxal-phosphate-dependent aminotransferase family. HemL subfamily. In terms of assembly, homodimer. It depends on pyridoxal 5'-phosphate as a cofactor.

Its subcellular location is the cytoplasm. The enzyme catalyses (S)-4-amino-5-oxopentanoate = 5-aminolevulinate. Its pathway is porphyrin-containing compound metabolism; protoporphyrin-IX biosynthesis; 5-aminolevulinate from L-glutamyl-tRNA(Glu): step 2/2. The chain is Glutamate-1-semialdehyde 2,1-aminomutase from Solibacter usitatus (strain Ellin6076).